Consider the following 469-residue polypeptide: Glutamine synthetase (469 aa).

The GS beta-grasp domain maps to 14-99; sequence NDVKFVDLRF…VCDILDPVSG (86 aa). Residues 106-469 form the GS catalytic domain; it reads RRGTAKKAEA…PVEYDMYYSA (364 aa). Positions 131 and 133 each coordinate Mg(2+). Residue Glu-209 coordinates ATP. Mg(2+) is bound by residues Glu-214 and Asp-221. L-glutamate-binding positions include 265–266 and Gly-266; that span reads NG. His-270 contributes to the Mg(2+) binding site. Residues 272 to 274 and Ser-274 each bind ATP; that span reads HQS. L-glutamate-binding residues include Arg-322, Glu-328, and Arg-340. ATP is bound by residues Arg-340, Arg-345, and Lys-353. Mg(2+) is bound at residue Glu-358. Arg-360 provides a ligand contact to L-glutamate. Residue Tyr-398 is modified to O-AMP-tyrosine.

Belongs to the glutamine synthetase family. As to quaternary structure, oligomer of 12 subunits arranged in the form of two hexameric ring. The cofactor is Mg(2+).

The protein localises to the cytoplasm. It carries out the reaction L-glutamate + NH4(+) + ATP = L-glutamine + ADP + phosphate + H(+). With respect to regulation, the activity of this enzyme could be controlled by adenylation under conditions of abundant glutamine. Its function is as follows. Catalyzes the ATP-dependent biosynthesis of glutamine from glutamate and ammonia. The sequence is that of Glutamine synthetase from Rhizobium leguminosarum bv. viciae.